Reading from the N-terminus, the 90-residue chain is Small ribosomal subunit protein bS20 (90 aa).

Residues M1–R25 are disordered.

Belongs to the bacterial ribosomal protein bS20 family.

Binds directly to 16S ribosomal RNA. This chain is Small ribosomal subunit protein bS20, found in Burkholderia multivorans (strain ATCC 17616 / 249).